The primary structure comprises 513 residues: MQPDPSGSGGDGNANAKAKLAPPPVTAAGGRPVSVLPHKTANVRDHYRIGKKLGQGQFGTTYLCVDKASGGEFACKSIPKRKLLCREDYEDVWREIQIMHHLSEHPNVVRIRGAYEDALFVHIVMELCAGGELFDRIVAKGHYTERAAAQLIRTIVAVVEGCHSLGVMHRDLKPENFLFASAAEDAPLKATDFGLSMFYKPGDKFSDVVGSPYYVAPEVLQKCYGPESDVWSAGVILYILLCGVPPFWAETEAGIFRQILRGKLDFESEPWPSISDSAKDLVRNMLCRDPTKRLTAHEVLCHPWIVDDAVAPDKPIDSAVLSRLKHFSAMNKLKKMALRVIAESLSEEEIGGLKELFKMIDTDDSGTITFDELKEGLKRVGSELTEHEIQALMEAADIDNSGTIDYGEFIAATLHMNKLEREENLVSAFSFFDKDGSGFITIDELSQACREFGLDDLHLEDMIKDVDQNNDGQIDYSEFTAMMRKGNAGGAGRRTMRNSLQLNLGEILNPSNS.

A disordered region spans residues 1-33 (MQPDPSGSGGDGNANAKAKLAPPPVTAAGGRPV). Positions 47–305 (YRIGKKLGQG…AHEVLCHPWI (259 aa)) constitute a Protein kinase domain. ATP contacts are provided by residues 53-61 (LGQGQFGTT) and Lys76. The active-site Proton acceptor is the Asp171. Residues 311 to 341 (APDKPIDSAVLSRLKHFSAMNKLKKMALRVI) are autoinhibitory domain. EF-hand domains follow at residues 348–383 (EEIGGLKELFKMIDTDDSGTITFDELKEGLKRVGSE), 384–419 (LTEHEIQALMEAADIDNSGTIDYGEFIAATLHMNKL), 420–455 (EREENLVSAFSFFDKDGSGFITIDELSQACREFGLD), and 458–489 (HLEDMIKDVDQNNDGQIDYSEFTAMMRKGNAG). Ca(2+)-binding residues include Asp361, Asp363, Ser365, Thr367, Glu372, Asp397, Asp399, Ser401, Thr403, Glu408, Asp433, Asp435, Ser437, Glu444, Asp467, Asn469, Asp471, Gln473, and Glu478.

The protein belongs to the protein kinase superfamily. Ser/Thr protein kinase family. CDPK subfamily. In terms of tissue distribution, expressed in roots.

Its subcellular location is the cytoplasm. It carries out the reaction L-seryl-[protein] + ATP = O-phospho-L-seryl-[protein] + ADP + H(+). The enzyme catalyses L-threonyl-[protein] + ATP = O-phospho-L-threonyl-[protein] + ADP + H(+). Its activity is regulated as follows. Activated by calcium. Autophosphorylation may play an important role in the regulation of the kinase activity. May play a role in signal transduction pathways that involve calcium as a second messenger. Possesses calcium-dependent protein kinase activity in vitro. The chain is Calcium-dependent protein kinase 24 from Oryza sativa subsp. japonica (Rice).